We begin with the raw amino-acid sequence, 74 residues long: O-conotoxin GeXXXIA (74 aa).

Positions Met1 to Ala22 are cleaved as a signal peptide. Positions Val23–Arg33 are excised as a propeptide.

Belongs to the conotoxin O1 superfamily. In terms of assembly, homodimer; disulfide-linked. In terms of processing, may contain 2 intrachain disulfide bonds and probably one interchain disulfide bond forming the homodimer. The disulfide pairing is not important for activity towards the different nAChR subtypes, since this peptide without disulfide bond or with different disulfide bonds shows the same activity. Expressed by the venom duct.

It localises to the secreted. Its function is as follows. The activity of this natural homodimer has not been tested due to low abundance. The synthetic linear peptide has been refolded, giving 4 different monomeric isomers (m1 to m4) with 2 disulfide bonds each. All isomers potently inhibit rat alpha-1-beta-1-delta-epsilon/CHRNA1-CHRNB1-CHRND-CHRNE and human alpha-9-alpha-10/CHRNA9-CHRNA10 nicotinic acetylcholine receptors (nAChR). In addition, they show a modest inhibition at human alpha-3-beta-2/CHRNA3-CHRNB2, alpha-3-beta-4/CHRNA3-CHRNB4, alpha-7/CHRNA7, and alpha-4-beta-4/CHRNA4-CHRNB4. The synthetic monomer peptide without disulfide bonds shows a potent activity on alpha-9-alpha-10/CHRNA9 and CHRNA10 (IC(50)=16.2 nM). This linear peptide does not act as a competitive antagonist, or as a channel pore blocker of nAChR. The sequence is that of O-conotoxin GeXXXIA from Conus generalis (General cone).